A 195-amino-acid chain; its full sequence is HTH-type transcriptional regulator BetI (195 aa).

The HTH tetR-type domain occupies 8-68 (EIRRAQLIDA…ATMRHVLRDL (61 aa)). A DNA-binding region (H-T-H motif) is located at residues 31-50 (TLASVAQRASISTGIVSHYF).

The protein operates within amine and polyamine biosynthesis; betaine biosynthesis via choline pathway [regulation]. Repressor involved in the biosynthesis of the osmoprotectant glycine betaine. It represses transcription of the choline transporter BetT and the genes of BetAB involved in the synthesis of glycine betaine. The sequence is that of HTH-type transcriptional regulator BetI from Paraburkholderia xenovorans (strain LB400).